We begin with the raw amino-acid sequence, 431 residues long: Homogentisate 1,2-dioxygenase (431 aa).

The Proton acceptor role is filled by histidine 286. Fe cation is bound by residues histidine 329 and glutamate 335. Residues tyrosine 344 and histidine 365 each contribute to the homogentisate site. Histidine 365 lines the Fe cation pocket.

It belongs to the homogentisate dioxygenase family. Hexamer; dimer of trimers. Requires Fe cation as cofactor.

The catalysed reaction is homogentisate + O2 = 4-maleylacetoacetate + H(+). Its pathway is amino-acid degradation; L-phenylalanine degradation; acetoacetate and fumarate from L-phenylalanine: step 4/6. Involved in the catabolism of homogentisate (2,5-dihydroxyphenylacetate or 2,5-OH-PhAc), a central intermediate in the degradation of phenylalanine and tyrosine. Catalyzes the oxidative ring cleavage of the aromatic ring of homogentisate to yield maleylacetoacetate. This is Homogentisate 1,2-dioxygenase from Pseudomonas fluorescens (strain Pf0-1).